We begin with the raw amino-acid sequence, 227 residues long: Cytochrome c oxidase subunit 2 (227 aa).

Topologically, residues 1–14 are mitochondrial intermembrane; sequence MAYPFQLGLQDATS. The helical transmembrane segment at 15 to 45 threads the bilayer; sequence PIMEELTNFHDHTLMIVFLISTLVLYIISLM. At 46 to 59 the chain is on the mitochondrial matrix side; it reads LTTKLTHTSTMDAQ. Residues 60–87 form a helical membrane-spanning segment; it reads EVETIWTILPAVILILIALPSLRILYMM. Residues 88–227 lie on the Mitochondrial intermembrane side of the membrane; the sequence is DEINNPVLTV…YFENWSASMI (140 aa). Cu cation is bound by residues His-161, Cys-196, Glu-198, Cys-200, His-204, and Met-207. Glu-198 is a binding site for Mg(2+). Residue Tyr-218 is modified to Phosphotyrosine.

The protein belongs to the cytochrome c oxidase subunit 2 family. In terms of assembly, component of the cytochrome c oxidase (complex IV, CIV), a multisubunit enzyme composed of 14 subunits. The complex is composed of a catalytic core of 3 subunits MT-CO1, MT-CO2 and MT-CO3, encoded in the mitochondrial DNA, and 11 supernumerary subunits COX4I, COX5A, COX5B, COX6A, COX6B, COX6C, COX7A, COX7B, COX7C, COX8 and NDUFA4, which are encoded in the nuclear genome. The complex exists as a monomer or a dimer and forms supercomplexes (SCs) in the inner mitochondrial membrane with NADH-ubiquinone oxidoreductase (complex I, CI) and ubiquinol-cytochrome c oxidoreductase (cytochrome b-c1 complex, complex III, CIII), resulting in different assemblies (supercomplex SCI(1)III(2)IV(1) and megacomplex MCI(2)III(2)IV(2)). Found in a complex with TMEM177, COA6, COX18, COX20, SCO1 and SCO2. Interacts with TMEM177 in a COX20-dependent manner. Interacts with COX20. Interacts with COX16. Cu cation is required as a cofactor.

It is found in the mitochondrion inner membrane. The catalysed reaction is 4 Fe(II)-[cytochrome c] + O2 + 8 H(+)(in) = 4 Fe(III)-[cytochrome c] + 2 H2O + 4 H(+)(out). Component of the cytochrome c oxidase, the last enzyme in the mitochondrial electron transport chain which drives oxidative phosphorylation. The respiratory chain contains 3 multisubunit complexes succinate dehydrogenase (complex II, CII), ubiquinol-cytochrome c oxidoreductase (cytochrome b-c1 complex, complex III, CIII) and cytochrome c oxidase (complex IV, CIV), that cooperate to transfer electrons derived from NADH and succinate to molecular oxygen, creating an electrochemical gradient over the inner membrane that drives transmembrane transport and the ATP synthase. Cytochrome c oxidase is the component of the respiratory chain that catalyzes the reduction of oxygen to water. Electrons originating from reduced cytochrome c in the intermembrane space (IMS) are transferred via the dinuclear copper A center (CU(A)) of subunit 2 and heme A of subunit 1 to the active site in subunit 1, a binuclear center (BNC) formed by heme A3 and copper B (CU(B)). The BNC reduces molecular oxygen to 2 water molecules using 4 electrons from cytochrome c in the IMS and 4 protons from the mitochondrial matrix. The sequence is that of Cytochrome c oxidase subunit 2 (MT-CO2) from Leopoldamys sabanus (Long-tailed giant rat).